Consider the following 410-residue polypeptide: MSYNSIRLPQDLPIYYKNFFPVKPFTKWLRYGQNNGDYFNRREFAFILADDVHIRYRSYNDEHAFFKALSSTNPEKLDIGAVYNHEPINNKRHTDYQAVERELVFDIDLTDYDPVRNCCKDATVCPKCWKFMVLAVKILDFQLEDMFDFKARMWVFSGRRGVHCWVGDKKARMLNNYQRSAIATRLNLFKKNGQCEVTEGRAKMTKVPPIVRDAFNVALKDGVFEKMIYDQGWLDKEDFITEYKFMSEVGRDDLRSLSETYKTPQERWNMIRGLFDDDYRKSLSPKDGLLDFKMQGRDRNYLLYFVLQRCYPRLDVNVSTGTNHLLKSPFCIHPKTGNVAVPLNVGKIEEFDVSKCPRIDHVVEELSSLLAERGNDENEDSKNRKFLAYKHGALAPYVENFEKFVSACIS.

Catalysis depends on residues E43, D106, and D108. The short motif at 118–129 (CCKDATVCPKCW) is the Zinc knuckle motif element.

It belongs to the eukaryotic-type primase small subunit family. In terms of assembly, heterodimer of a small subunit and a large subunit.

In terms of biological role, DNA primase is the polymerase that synthesizes small RNA primers for the Okazaki fragments made during discontinuous DNA replication. This Caenorhabditis elegans protein is DNA primase small subunit (pri-1).